The primary structure comprises 464 residues: tRNA modification GTPase MnmE (464 aa).

3 residues coordinate (6S)-5-formyl-5,6,7,8-tetrahydrofolate: Arg25, Glu87, and Lys130. In terms of domain architecture, TrmE-type G spans 226–386 (GLSVVLAGQP…LRAELLRIAG (161 aa)). Asn236 contributes to the K(+) binding site. GTP-binding positions include 236 to 241 (NVGKSS), 255 to 261 (TPIAGTT), and 280 to 283 (DTAG). Mg(2+) is bound at residue Ser240. The K(+) site is built by Thr255, Ile257, and Thr260. A Mg(2+)-binding site is contributed by Thr261. Residue Lys464 participates in (6S)-5-formyl-5,6,7,8-tetrahydrofolate binding.

This sequence belongs to the TRAFAC class TrmE-Era-EngA-EngB-Septin-like GTPase superfamily. TrmE GTPase family. In terms of assembly, homodimer. Heterotetramer of two MnmE and two MnmG subunits. K(+) serves as cofactor.

The protein resides in the cytoplasm. Exhibits a very high intrinsic GTPase hydrolysis rate. Involved in the addition of a carboxymethylaminomethyl (cmnm) group at the wobble position (U34) of certain tRNAs, forming tRNA-cmnm(5)s(2)U34. In Burkholderia ambifaria (strain MC40-6), this protein is tRNA modification GTPase MnmE.